The chain runs to 292 residues: 1D-myo-inositol 2-acetamido-2-deoxy-alpha-D-glucopyranoside deacetylase (292 aa).

Zn(2+) contacts are provided by His-12, Asp-15, and His-147.

The protein belongs to the MshB deacetylase family. Requires Zn(2+) as cofactor.

The catalysed reaction is 1D-myo-inositol 2-acetamido-2-deoxy-alpha-D-glucopyranoside + H2O = 1D-myo-inositol 2-amino-2-deoxy-alpha-D-glucopyranoside + acetate. Functionally, catalyzes the deacetylation of 1D-myo-inositol 2-acetamido-2-deoxy-alpha-D-glucopyranoside (GlcNAc-Ins) in the mycothiol biosynthesis pathway. This Rhodococcus opacus (strain B4) protein is 1D-myo-inositol 2-acetamido-2-deoxy-alpha-D-glucopyranoside deacetylase.